The sequence spans 334 residues: Putative violet-sensitive opsin (334 aa).

The Extracellular segment spans residues 1–29 (MGKYFYLYENISKVGPYDGPQYYLAPTWA). Residue Asn-10 is glycosylated (N-linked (GlcNAc...) asparagine). A helical membrane pass occupies residues 30–54 (FYLQAAFMGFVFFVGTPLNFVVLLA). At 55–66 (TAKYKKLRVPLN) the chain is on the cytoplasmic side. The chain crosses the membrane as a helical span at residues 67–88 (YILVNITFAGFIFVTFSVSQVF). At 89–106 (LASVRGYYFFGQTLCALE) the chain is on the extracellular side. A disulfide bridge connects residues Cys-103 and Cys-179. The helical transmembrane segment at 107-126 (AAVGAVAGLVTSWSLAVLSF) threads the bilayer. Residues 127–145 (ERYLVICKPFGAFKFGSNH) are Cytoplasmic-facing. Residues 146–168 (ALAAVIFTWFMGVVRCPPFFGWS) form a helical membrane-spanning segment. The Extracellular segment spans residues 169-194 (RYIPEGLGCSCGPDWYTNCEEFSCAS). A helical membrane pass occupies residues 195 to 222 (YSKFLLVTCFICPITIIIFSYSQLLGAL). At 223 to 244 (RAVAAQQAESASTQKAEKEVSR) the chain is on the cytoplasmic side. The chain crosses the membrane as a helical span at residues 245-272 (MIIVMVASFVTCYGPYALTAQYYAYSQD). The Extracellular portion of the chain corresponds to 273 to 279 (ENKDYRL). Residues 280–301 (VTIPAFFSKSSCVYNPLIYAFM) form a helical membrane-spanning segment. Lys-288 carries the N6-(retinylidene)lysine modification. The Cytoplasmic portion of the chain corresponds to 302–334 (NKQFNGCIMEMVFGKKMEEASEVSSKTEVSTDS).

Belongs to the G-protein coupled receptor 1 family. Opsin subfamily. In terms of processing, phosphorylated on some or all of the serine and threonine residues present in the C-terminal region. In terms of tissue distribution, the three color pigments are found in the cone photoreceptor cells.

It localises to the membrane. Its function is as follows. Visual pigments are the light-absorbing molecules that mediate vision. They consist of an apoprotein, opsin, covalently linked to cis-retinal. The protein is Putative violet-sensitive opsin of Oryzias latipes (Japanese rice fish).